Here is a 300-residue protein sequence, read N- to C-terminus: Rhodopsin (300 aa).

The Extracellular portion of the chain corresponds to Leu-1–Met-18. The helical transmembrane segment at Tyr-19–Val-43 threads the bilayer. Residues Phe-44–Asn-55 lie on the Cytoplasmic side of the membrane. Residues Leu-56 to Val-78 form a helical membrane-spanning segment. The Extracellular portion of the chain corresponds to Thr-79–Cys-92. A disulfide bridge links Cys-92 with Cys-168. The chain crosses the membrane as a helical span at residues Gln-93–Phe-115. The 'Ionic lock' involved in activated form stabilization signature appears at Asp-116–Tyr-118. Topologically, residues Asp-116–Lys-134 are cytoplasmic. A helical transmembrane segment spans residues Ala-135–Phe-155. Topologically, residues Gly-156–Ser-181 are extracellular. Residues Tyr-182–Val-203 form a helical membrane-spanning segment. Topologically, residues Phe-204 to Lys-244 are cytoplasmic. A helical transmembrane segment spans residues Ile-245–Val-266. The Extracellular portion of the chain corresponds to Gly-267–Val-277. The helical transmembrane segment at Tyr-278–Ile-299 threads the bilayer. Residue Lys-287 is modified to N6-(retinylidene)lysine.

It belongs to the G-protein coupled receptor 1 family. Opsin subfamily. Homodimer. Interacts with GNAQ. Contains one covalently linked retinal chromophore.

It is found in the cell projection. Its subcellular location is the rhabdomere membrane. Photoreceptor required for image-forming vision at low light intensity. Can use both retinal and 3-dehydroretinal as visual pigment. Light-induced isomerization of 11-cis to all-trans retinal triggers a conformational change that activates signaling via G-proteins. Signaling via GNAQ probably mediates the activation of phospholipase C. The sequence is that of Rhodopsin (RHO) from Cambarus maculatus (Freckled crayfish).